Consider the following 493-residue polypeptide: MASGILVNVKEEVTCPICLELLTQPLSLDCGHSFCQACLTANHEKSMLDKGESSCPVCRISYQPENIRPNRHVANIVEKLREVKLSPEGQKVDHCARHGEKLLLFCQEDGKVICWLCERSQEHRGHHTFLTEEVAQECQVKLQAALEMLRQKQQEAEELEADIREEKASWKTQIQYDKTNVLADFEQLRDILDWEESNELQNLEKEEEDILKRLTKSETEMVQQTQSVRELISDLEHRLQGSVMELLQGVDGVIKRMENVTLKKPETFPKNRRRVFRAPDLKGMLEVFRELTDVRRYWVDVTVAPNNISCAVISEDMRQVSSPKPQIIYGAQGTRYQTFMNFNYCTGILGSQSITSGKHYWEVDVSKKSAWILGVCAGFQPDATCNIEKNENYQPKYGYWVIGLEEGVKCSAFQDGSFHTPSAPFIVPLSVIICPDRVGVFLDYEACTVSFFNITNHGFLIYKFSHCSFSQPVFPYLNPRKCRVPMTLCSPSS.

N-acetylalanine is present on Ala-2. The RING-type zinc finger occupies 15 to 59 (CPICLELLTQPLSLDCGHSFCQACLTANHEKSMLDKGESSCPVCR). At Ser-86 the chain carries Phosphoserine. The B box-type zinc finger occupies 90 to 132 (QKVDHCARHGEKLLLFCQEDGKVICWLCERSQEHRGHHTFLTE). Zn(2+)-binding residues include Cys-95, His-98, Cys-117, and His-123. Residues 131–240 (TEEVAQECQV…LISDLEHRLQ (110 aa)) are a coiled coil. Residues 185 to 198 (FEQLRDILDWEESN) are required for interaction with GABARAP and for autophagy. The B30.2/SPRY domain maps to 281–493 (LKGMLEVFRE…VPMTLCSPSS (213 aa)).

The protein belongs to the TRIM/RBCC family. As to quaternary structure, can form homodimers and homotrimers. In addition to lower-order dimerization, also exhibits a higher-order multimerization and both low- and high-order multimerizations are essential for its restriction activity. Interacts with BTBD1 and BTBD2. Interacts with PSMC4, PSMC5, PSMD7 and HSPA8/HSC70. Interacts (via B30.2/SPRY domain) with HSPA1A/B. Interacts with PSMC2, MAP3K7/TAK1, TAB2 and TAB3. Interacts with SQSTM1. Interacts with TRIM6 and TRIM34. Interacts with ULK1 (phosphorylated form), GABARAP, GABARAPL1, GABARAPL2, MAP1LC3A, MAP1LC3C and BECN1. Post-translationally, degraded in a proteasome-independent fashion in the absence of viral infection but in a proteasome-dependent fashion following exposure to restriction sensitive virus. Autoubiquitinated in a RING finger- and UBE2D2-dependent manner. Monoubiquitinated by TRIM21. Deubiquitinated by Yersinia YopJ. Ubiquitination may not lead to proteasomal degradation.

It localises to the cytoplasm. The protein resides in the nucleus. The enzyme catalyses S-ubiquitinyl-[E2 ubiquitin-conjugating enzyme]-L-cysteine + [acceptor protein]-L-lysine = [E2 ubiquitin-conjugating enzyme]-L-cysteine + N(6)-ubiquitinyl-[acceptor protein]-L-lysine.. It participates in protein modification; protein ubiquitination. Its function is as follows. Capsid-specific restriction factor that prevents infection from non-host-adapted retroviruses. Blocks viral replication early in the life cycle, after viral entry but before reverse transcription. In addition to acting as a capsid-specific restriction factor, also acts as a pattern recognition receptor that activates innate immune signaling in response to the retroviral capsid lattice. Binding to the viral capsid triggers its E3 ubiquitin ligase activity, and in concert with the heterodimeric ubiquitin conjugating enzyme complex UBE2V1-UBE2N (also known as UBC13-UEV1A complex) generates 'Lys-63'-linked polyubiquitin chains, which in turn are catalysts in the autophosphorylation of the MAP3K7/TAK1 complex (includes TAK1, TAB2, and TAB3). Activation of the MAP3K7/TAK1 complex by autophosphorylation results in the induction and expression of NF-kappa-B and MAPK-responsive inflammatory genes, thereby leading to an innate immune response in the infected cell. Plays a role in regulating autophagy through activation of autophagy regulator BECN1 by causing its dissociation from its inhibitors BCL2 and TAB2. This Gorilla gorilla gorilla (Western lowland gorilla) protein is Tripartite motif-containing protein 5 (TRIM5).